We begin with the raw amino-acid sequence, 1370 residues long: DNA-directed RNA polymerase subunit beta (1370 aa).

The protein belongs to the RNA polymerase beta chain family. As to quaternary structure, the RNAP catalytic core consists of 2 alpha, 1 beta, 1 beta' and 1 omega subunit. When a sigma factor is associated with the core the holoenzyme is formed, which can initiate transcription.

The enzyme catalyses RNA(n) + a ribonucleoside 5'-triphosphate = RNA(n+1) + diphosphate. DNA-dependent RNA polymerase catalyzes the transcription of DNA into RNA using the four ribonucleoside triphosphates as substrates. In Geobacter sulfurreducens (strain ATCC 51573 / DSM 12127 / PCA), this protein is DNA-directed RNA polymerase subunit beta.